Here is a 287-residue protein sequence, read N- to C-terminus: Cyclopropane mycolic acid synthase 1 (287 aa).

Residues 33-34 (YS), 68-76 (LLDVGCGWG), 94-99 (TLSKNQ), and 123-124 (WE) contribute to the S-adenosyl-L-methionine site. Residue Cys269 is part of the active site.

It belongs to the CFA/CMAS family. As to quaternary structure, homodimer.

The protein localises to the cytoplasm. The catalysed reaction is a 1-acyl-2-(9Z)-enoyl-sn-glycero-3-phospholipid + S-adenosyl-L-methionine = a 1-acyl-2-(9-cyclopronane)-acyl-sn-glycero-3-phospholipid + S-adenosyl-L-homocysteine + H(+). It participates in lipid metabolism; mycolic acid biosynthesis. In terms of biological role, catalyzes the conversion of a double bond to a cyclopropane ring at the distal position of an alpha mycolic acid via the transfer of a methylene group from S-adenosyl-L-methionine. Cyclopropanated mycolic acids are key factors participating in cell envelope permeability, host immunomodulation and persistence. This Mycobacterium tuberculosis (strain CDC 1551 / Oshkosh) protein is Cyclopropane mycolic acid synthase 1 (cmaA1).